A 145-amino-acid polypeptide reads, in one-letter code: Large ribosomal subunit protein uL16 (145 aa).

This sequence belongs to the universal ribosomal protein uL16 family. As to quaternary structure, part of the 50S ribosomal subunit.

Functionally, binds 23S rRNA and is also seen to make contacts with the A and possibly P site tRNAs. The polypeptide is Large ribosomal subunit protein uL16 (Agathobacter rectalis (strain ATCC 33656 / DSM 3377 / JCM 17463 / KCTC 5835 / VPI 0990) (Eubacterium rectale)).